Consider the following 589-residue polypeptide: Putative adenine deaminase BC_3012 (589 aa).

It belongs to the metallo-dependent hydrolases superfamily. Adenine deaminase family.

It catalyses the reaction adenine + H2O + H(+) = hypoxanthine + NH4(+). The protein is Putative adenine deaminase BC_3012 of Bacillus cereus (strain ATCC 14579 / DSM 31 / CCUG 7414 / JCM 2152 / NBRC 15305 / NCIMB 9373 / NCTC 2599 / NRRL B-3711).